Consider the following 357-residue polypeptide: Protein pelota homolog (357 aa).

The protein belongs to the eukaryotic release factor 1 family. Pelota subfamily. In terms of assembly, monomer. The cofactor is a divalent metal cation.

The protein localises to the cytoplasm. In terms of biological role, may function in recognizing stalled ribosomes, interact with stem-loop structures in stalled mRNA molecules, and effect endonucleolytic cleavage of the mRNA. May play a role in the release non-functional ribosomes and degradation of damaged mRNAs. Has endoribonuclease activity. This is Protein pelota homolog from Thermococcus onnurineus (strain NA1).